The primary structure comprises 273 residues: Shikimate dehydrogenase (NADP(+)) (273 aa).

Residues 15 to 17 (SLS) and Thr-62 each bind shikimate. Lys-66 serves as the catalytic Proton acceptor. Glu-78 is a binding site for NADP(+). Residues Asn-87 and Asp-102 each coordinate shikimate. NADP(+) contacts are provided by residues 126-130 (GAGGA), 149-154 (NRTPER), Ile-215, and Gly-238.

The protein belongs to the shikimate dehydrogenase family. In terms of assembly, homodimer.

The enzyme catalyses shikimate + NADP(+) = 3-dehydroshikimate + NADPH + H(+). The protein operates within metabolic intermediate biosynthesis; chorismate biosynthesis; chorismate from D-erythrose 4-phosphate and phosphoenolpyruvate: step 4/7. Involved in the biosynthesis of the chorismate, which leads to the biosynthesis of aromatic amino acids. Catalyzes the reversible NADPH linked reduction of 3-dehydroshikimate (DHSA) to yield shikimate (SA). This Desulfitobacterium hafniense (strain Y51) protein is Shikimate dehydrogenase (NADP(+)).